A 217-amino-acid polypeptide reads, in one-letter code: Pyridoxine/pyridoxamine 5'-phosphate oxidase (217 aa).

FMN contacts are provided by residues 66-71 (RMVLLK), 81-82 (FT), arginine 87, lysine 88, and glutamine 110. Lysine 71 lines the substrate pocket. 3 residues coordinate substrate: tyrosine 128, arginine 132, and serine 136. FMN-binding positions include 145-146 (QS) and tryptophan 190. 196–198 (RLH) contributes to the substrate binding site. An FMN-binding site is contributed by arginine 200.

This sequence belongs to the pyridoxamine 5'-phosphate oxidase family. As to quaternary structure, homodimer. It depends on FMN as a cofactor.

It carries out the reaction pyridoxamine 5'-phosphate + O2 + H2O = pyridoxal 5'-phosphate + H2O2 + NH4(+). The enzyme catalyses pyridoxine 5'-phosphate + O2 = pyridoxal 5'-phosphate + H2O2. It participates in cofactor metabolism; pyridoxal 5'-phosphate salvage; pyridoxal 5'-phosphate from pyridoxamine 5'-phosphate: step 1/1. The protein operates within cofactor metabolism; pyridoxal 5'-phosphate salvage; pyridoxal 5'-phosphate from pyridoxine 5'-phosphate: step 1/1. Functionally, catalyzes the oxidation of either pyridoxine 5'-phosphate (PNP) or pyridoxamine 5'-phosphate (PMP) into pyridoxal 5'-phosphate (PLP). This Colwellia psychrerythraea (strain 34H / ATCC BAA-681) (Vibrio psychroerythus) protein is Pyridoxine/pyridoxamine 5'-phosphate oxidase.